A 47-amino-acid chain; its full sequence is Large ribosomal subunit protein bL32c (47 aa).

It belongs to the bacterial ribosomal protein bL32 family.

The protein localises to the plastid. The chain is Large ribosomal subunit protein bL32c (rpl32) from Prototheca wickerhamii.